We begin with the raw amino-acid sequence, 320 residues long: Na(+)-translocating NADH-quinone reductase subunit C (320 aa).

The helical transmembrane segment at 16–36 (WYIVSFILGLSLFAGVLLSTI) threads the bilayer. FMN phosphoryl threonine is present on Thr-285.

This sequence belongs to the NqrC family. As to quaternary structure, composed of six subunits; NqrA, NqrB, NqrC, NqrD, NqrE and NqrF. Requires FMN as cofactor.

It localises to the cell inner membrane. It catalyses the reaction a ubiquinone + n Na(+)(in) + NADH + H(+) = a ubiquinol + n Na(+)(out) + NAD(+). Its function is as follows. NQR complex catalyzes the reduction of ubiquinone-1 to ubiquinol by two successive reactions, coupled with the transport of Na(+) ions from the cytoplasm to the periplasm. NqrA to NqrE are probably involved in the second step, the conversion of ubisemiquinone to ubiquinol. This Chlamydia pneumoniae (Chlamydophila pneumoniae) protein is Na(+)-translocating NADH-quinone reductase subunit C.